The sequence spans 421 residues: UDP-N-acetylglucosamine 1-carboxyvinyltransferase 1 (421 aa).

22-23 lines the phosphoenolpyruvate pocket; sequence KN. Arg-95 contacts UDP-N-acetyl-alpha-D-glucosamine. The Proton donor role is filled by Cys-119. Cys-119 bears the 2-(S-cysteinyl)pyruvic acid O-phosphothioketal mark. Residues 124–128, Asp-308, and Val-330 each bind UDP-N-acetyl-alpha-D-glucosamine; that span reads RPIEQ.

This sequence belongs to the EPSP synthase family. MurA subfamily.

It localises to the cytoplasm. It catalyses the reaction phosphoenolpyruvate + UDP-N-acetyl-alpha-D-glucosamine = UDP-N-acetyl-3-O-(1-carboxyvinyl)-alpha-D-glucosamine + phosphate. It functions in the pathway cell wall biogenesis; peptidoglycan biosynthesis. Cell wall formation. Adds enolpyruvyl to UDP-N-acetylglucosamine. The polypeptide is UDP-N-acetylglucosamine 1-carboxyvinyltransferase 1 (Staphylococcus aureus (strain bovine RF122 / ET3-1)).